Reading from the N-terminus, the 115-residue chain is Nucleoid-associated protein LA_4332 (115 aa).

This sequence belongs to the YbaB/EbfC family. In terms of assembly, homodimer.

Its subcellular location is the cytoplasm. The protein localises to the nucleoid. Its function is as follows. Binds to DNA and alters its conformation. May be involved in regulation of gene expression, nucleoid organization and DNA protection. The protein is Nucleoid-associated protein LA_4332 of Leptospira interrogans serogroup Icterohaemorrhagiae serovar Lai (strain 56601).